A 197-amino-acid chain; its full sequence is Tyrosine-protein phosphatase-like protein OCA2 (197 aa).

Residues 10–160 (SPVVSTDVSL…FETNLKIPRN (151 aa)) form the Tyrosine-protein phosphatase domain. At serine 181 the chain carries Phosphoserine.

This sequence belongs to the protein-tyrosine phosphatase family.

It localises to the cytoplasm. Functionally, required for normal growth in the presence of linoleic acid hydroperoxide (LoaOOH). The protein is Tyrosine-protein phosphatase-like protein OCA2 (OCA2) of Saccharomyces cerevisiae (strain ATCC 204508 / S288c) (Baker's yeast).